Reading from the N-terminus, the 185-residue chain is Ribosome-recycling factor (185 aa).

The protein belongs to the RRF family.

Its subcellular location is the cytoplasm. In terms of biological role, responsible for the release of ribosomes from messenger RNA at the termination of protein biosynthesis. May increase the efficiency of translation by recycling ribosomes from one round of translation to another. This is Ribosome-recycling factor from Streptococcus mutans serotype c (strain ATCC 700610 / UA159).